A 268-amino-acid polypeptide reads, in one-letter code: 3-deoxy-manno-octulosonate cytidylyltransferase (268 aa).

Belongs to the KdsB family.

It is found in the cytoplasm. The enzyme catalyses 3-deoxy-alpha-D-manno-oct-2-ulosonate + CTP = CMP-3-deoxy-beta-D-manno-octulosonate + diphosphate. Its pathway is nucleotide-sugar biosynthesis; CMP-3-deoxy-D-manno-octulosonate biosynthesis; CMP-3-deoxy-D-manno-octulosonate from 3-deoxy-D-manno-octulosonate and CTP: step 1/1. It functions in the pathway bacterial outer membrane biogenesis; lipopolysaccharide biosynthesis. In terms of biological role, activates KDO (a required 8-carbon sugar) for incorporation into bacterial lipopolysaccharide in Gram-negative bacteria. The chain is 3-deoxy-manno-octulosonate cytidylyltransferase from Psychrobacter arcticus (strain DSM 17307 / VKM B-2377 / 273-4).